The chain runs to 637 residues: tRNA uridine 5-carboxymethylaminomethyl modification enzyme MnmG (637 aa).

FAD is bound by residues 15 to 20 (GAGHAG), Val-127, and Ser-182. 274–288 (GPRYCPSIEDKVVRF) serves as a coordination point for NAD(+). FAD is bound at residue Gln-371.

It belongs to the MnmG family. Homodimer. Heterotetramer of two MnmE and two MnmG subunits. The cofactor is FAD.

The protein localises to the cytoplasm. In terms of biological role, NAD-binding protein involved in the addition of a carboxymethylaminomethyl (cmnm) group at the wobble position (U34) of certain tRNAs, forming tRNA-cmnm(5)s(2)U34. The chain is tRNA uridine 5-carboxymethylaminomethyl modification enzyme MnmG from Heliobacterium modesticaldum (strain ATCC 51547 / Ice1).